The sequence spans 456 residues: Perilipin-5 (456 aa).

Residues 1 to 20 (MSEDEAAQAPGPSLSEQDQQ) form a disordered region. The segment at 1-108 (MSEDEAAQAP…KLEEKLPFLQ (108 aa)) is interaction with LIPE. Residues 1–173 (MSEDEAAQAP…HFLPMTEEEL (173 aa)) are essential for lipid droplet targeting. Phosphoserine occurs at positions 2, 148, and 324. The tract at residues 185–456 (VGSVEEQRKH…KHTLMPELDF (272 aa)) is interaction with PNPLA2 and ABHD5. Residues 420-456 (AWQAQHGEGTVLSGNIPEEEPEPPSRPKHTLMPELDF) form a disordered region. Residues 438 to 456 (EEPEPPSRPKHTLMPELDF) form a recruits mitochondria at the lipid droplet surface region.

It belongs to the perilipin family. In terms of assembly, homooligomer. Interacts with PNPLA2; prevents interaction of PNPLA2 with ABHD5. Interacts with ABHD5; targets ABHD5 to lipid droplets and promotes interaction of ABHD5 with PNPLA2. Interacts with LIPE. In terms of processing, phosphorylated by PKA. Phosphorylated on serine in skeletal muscle at rest or upon lipolytic stimulation.

Its subcellular location is the lipid droplet. The protein localises to the cytoplasm. The protein resides in the mitochondrion. Its function is as follows. Lipid droplet-associated protein that maintains the balance between lipogenesis and lipolysis and also regulates fatty acid oxidation in oxidative tissues. Recruits mitochondria to the surface of lipid droplets and is involved in lipid droplet homeostasis by regulating both the storage of fatty acids in the form of triglycerides and the release of fatty acids for mitochondrial fatty acid oxidation. In lipid droplet triacylglycerol hydrolysis, plays a role as a scaffolding protein for three major key lipolytic players: ABHD5, PNPLA2 and LIPE. Reduces the triacylglycerol hydrolase activity of PNPLA2 by recruiting and sequestering PNPLA2 to lipid droplets. Phosphorylation by PKA enables lipolysis probably by promoting release of ABHD5 from the perilipin scaffold and by facilitating interaction of ABHD5 with PNPLA2. Also increases lipolysis through interaction with LIPE and upon PKA-mediated phosphorylation of LIPE. In Ovis aries (Sheep), this protein is Perilipin-5 (Plin5).